Here is a 112-residue protein sequence, read N- to C-terminus: MEAKAVARYIRISPRRVRQVIDLIRGKGVREAEAILMVTPKRGSRVVAKVLKSAVANAEHNYDLDASNLVVSRAYVDEGPTLKRYQPRAMGRANIRRKRTSHITVVVGEKED.

This sequence belongs to the universal ribosomal protein uL22 family. In terms of assembly, part of the 50S ribosomal subunit.

Functionally, this protein binds specifically to 23S rRNA; its binding is stimulated by other ribosomal proteins, e.g. L4, L17, and L20. It is important during the early stages of 50S assembly. It makes multiple contacts with different domains of the 23S rRNA in the assembled 50S subunit and ribosome. The globular domain of the protein is located near the polypeptide exit tunnel on the outside of the subunit, while an extended beta-hairpin is found that lines the wall of the exit tunnel in the center of the 70S ribosome. This chain is Large ribosomal subunit protein uL22, found in Moorella thermoacetica (strain ATCC 39073 / JCM 9320).